Here is a 638-residue protein sequence, read N- to C-terminus: Threonine--tRNA ligase (638 aa).

One can recognise a TGS domain in the interval Met1–Thr61. A catalytic region spans residues Asp243–Pro534. Positions 334, 385, and 511 each coordinate Zn(2+).

It belongs to the class-II aminoacyl-tRNA synthetase family. In terms of assembly, homodimer. The cofactor is Zn(2+).

It localises to the cytoplasm. The catalysed reaction is tRNA(Thr) + L-threonine + ATP = L-threonyl-tRNA(Thr) + AMP + diphosphate + H(+). Functionally, catalyzes the attachment of threonine to tRNA(Thr) in a two-step reaction: L-threonine is first activated by ATP to form Thr-AMP and then transferred to the acceptor end of tRNA(Thr). Also edits incorrectly charged L-seryl-tRNA(Thr). The protein is Threonine--tRNA ligase of Idiomarina loihiensis (strain ATCC BAA-735 / DSM 15497 / L2-TR).